Here is a 309-residue protein sequence, read N- to C-terminus: Ecotin-like protein 3 (309 aa).

Residues Gln-140 to Ser-309 are disordered. Basic and acidic residues predominate over residues Val-156 to Ala-167. The segment covering His-168–Val-180 has biased composition (low complexity). Residues Ser-181 to Met-190 show a composition bias toward basic and acidic residues. Residues Leu-196–Arg-205 show a composition bias toward low complexity. The span at His-209–Leu-221 shows a compositional bias: polar residues. Over residues Ser-261–Val-279 the composition is skewed to basic and acidic residues. Positions Ser-290–Lys-299 are enriched in low complexity.

The protein belongs to the protease inhibitor I11 (ecotin) family.

This chain is Ecotin-like protein 3, found in Leishmania braziliensis.